The chain runs to 334 residues: Glutaminase (334 aa).

Residues serine 76, asparagine 126, glutamate 170, asparagine 177, tyrosine 201, tyrosine 253, and valine 271 each contribute to the substrate site.

Belongs to the glutaminase family. As to quaternary structure, homotetramer.

The enzyme catalyses L-glutamine + H2O = L-glutamate + NH4(+). This chain is Glutaminase, found in Nostoc sp. (strain PCC 7120 / SAG 25.82 / UTEX 2576).